The sequence spans 336 residues: Torsin-1B (336 aa).

The first 24 residues, 1 to 24, serve as a signal peptide directing secretion; sequence MRRIGAFGGSTALWALLAAHVAGA. A glycan (N-linked (GlcNAc...) asparagine) is linked at Asn64. Position 109 to 116 (109 to 116) interacts with ATP; sequence GWAGTGKN. Asn165 is a glycosylation site (N-linked (GlcNAc...) asparagine).

The protein belongs to the ClpA/ClpB family. Torsin subfamily. As to quaternary structure, homohexamer. Interacts with TOR1A; the interaction may be specific of neural tissues. Interacts with TOR1AIP1; TOR1AIP1 is required for TOR1B location on the nuclear membrane. Interacts (ATP-bound) with TOR1AIP2; important for endoplasmic reticulum integrity. N-glycosylated. In terms of tissue distribution, highly expressed in liver and muscle; lower expression levels are observed in brain (at protein level).

The protein resides in the endoplasmic reticulum lumen. It localises to the nucleus membrane. It catalyses the reaction ATP + H2O = ADP + phosphate + H(+). Its function is as follows. May serve as a molecular chaperone assisting in the proper folding of secreted and/or membrane proteins. Plays a role in non-neural cells nuclear envelope and endoplasmic reticulum integrity. May have a redundant function with TOR1A in non-neural tissues. The polypeptide is Torsin-1B (Tor1b) (Mus musculus (Mouse)).